Reading from the N-terminus, the 243-residue chain is Bidirectional sugar transporter SWEET2a (243 aa).

The Extracellular segment spans residues 1 to 23 (MDWAAPALTSFVADSSYRHLCCY). The helical transmembrane segment at 24 to 44 (GAGIAGNVFAFVLFISPLPTF) threads the bilayer. One can recognise a MtN3/slv 1 domain in the interval 24–111 (GAGIAGNVFA…AVFIAFADAK (88 aa)). Residues 45–57 (KRIVRNGSTEQFS) lie on the Cytoplasmic side of the membrane. Residues 58 to 80 (AMPYIYSLLNCLICMWYGLPFVS) traverse the membrane as a helical segment. Topologically, residues 81-89 (YGVVLVATV) are extracellular. The helical transmembrane segment at 90-110 (NSIGAVFQLAYTAVFIAFADA) threads the bilayer. At 111–117 (KQRLKVS) the chain is on the cytoplasmic side. Residues 118 to 138 (ALLAAVFVVFGLIVFVSLALL) traverse the membrane as a helical segment. Residues 139–145 (DHPTRQM) lie on the Extracellular side of the membrane. The chain crosses the membrane as a helical span at residues 146-166 (FVGYLSVASLIFMFASPLSII). Residues 147–230 (VGYLSVASLI…VLYAYFRKGS (84 aa)) form the MtN3/slv 2 domain. Residues 167–179 (NLVIRTKSVEYMP) lie on the Cytoplasmic side of the membrane. Residues 180–200 (FYLSLSMFLMSASFFGYGVLL) form a helical membrane-spanning segment. At 201-202 (ND) the chain is on the extracellular side. The helical transmembrane segment at 203-223 (FFIYIPNGIGTILGIIQLVLY) threads the bilayer. The Cytoplasmic segment spans residues 224-243 (AYFRKGSSEEAKLPLLVTHT).

It belongs to the SWEET sugar transporter family. As to quaternary structure, forms homooligomers and/or heterooligomers.

Its subcellular location is the cell membrane. Mediates both low-affinity uptake and efflux of sugar across the plasma membrane. The polypeptide is Bidirectional sugar transporter SWEET2a (Sorghum bicolor (Sorghum)).